Here is a 241-residue protein sequence, read N- to C-terminus: MLRVLIVDDEMLARDELAYLLKRTNDEMEINEAENIESAFDQMMDQKPDLLFLDVDLSGENGFDIAKRLKKMKHPPAIVFATAYDQYALKAFEVDALDYLTKPFDEERIQQTLKKYKKVNRDIVETEQNSHAGQHKLALSVGESIVIVDTKDIIYAGTEDGHVNVKTFDHSYTVSDTLVVIEKKLPDSDFIRVHRSFVVNTEYIKEIQPWFNSTYNLIMKDGSKIPVSRTYAKELKKLLHI.

In terms of domain architecture, Response regulatory spans 3–117 (RVLIVDDEML…RIQQTLKKYK (115 aa)). Asp54 is modified (4-aspartylphosphate). In terms of domain architecture, HTH LytTR-type spans 137–241 (LALSVGESIV…AKELKKLLHI (105 aa)).

Post-translationally, phosphorylated by LytS.

It localises to the cytoplasm. Member of the two-component regulatory system LytS/LytT that probably regulates genes involved in cell wall metabolism. The chain is Sensory transduction protein LytT (lytT) from Bacillus subtilis (strain 168).